We begin with the raw amino-acid sequence, 164 residues long: Protein-export protein SecB (164 aa).

Belongs to the SecB family. Homotetramer, a dimer of dimers. One homotetramer interacts with 1 SecA dimer.

It is found in the cytoplasm. Its function is as follows. One of the proteins required for the normal export of preproteins out of the cell cytoplasm. It is a molecular chaperone that binds to a subset of precursor proteins, maintaining them in a translocation-competent state. It also specifically binds to its receptor SecA. The polypeptide is Protein-export protein SecB (Caulobacter sp. (strain K31)).